A 129-amino-acid chain; its full sequence is D-ribose pyranase (129 aa).

H20 (proton donor) is an active-site residue. Substrate contacts are provided by residues D28, H96, and 118–120 (YAN).

It belongs to the RbsD / FucU family. RbsD subfamily. Homodecamer.

Its subcellular location is the cytoplasm. It catalyses the reaction beta-D-ribopyranose = beta-D-ribofuranose. It participates in carbohydrate metabolism; D-ribose degradation; D-ribose 5-phosphate from beta-D-ribopyranose: step 1/2. Catalyzes the interconversion of beta-pyran and beta-furan forms of D-ribose. This Streptomyces coelicolor (strain ATCC BAA-471 / A3(2) / M145) protein is D-ribose pyranase.